The primary structure comprises 341 residues: Glyceraldehyde-3-phosphate dehydrogenase 2 (341 aa).

Residues 12-13 (RI), Arg-78, and Thr-120 each bind NAD(+). D-glyceraldehyde 3-phosphate-binding positions include 152 to 154 (SCT) and Thr-183. Catalysis depends on Cys-153, which acts as the Nucleophile. Asn-184 provides a ligand contact to NAD(+). Residues Arg-198, 211–212 (TG), and Arg-234 each bind D-glyceraldehyde 3-phosphate. Asn-313 lines the NAD(+) pocket.

The protein belongs to the glyceraldehyde-3-phosphate dehydrogenase family. Homotetramer.

The protein resides in the cytoplasm. It catalyses the reaction D-glyceraldehyde 3-phosphate + phosphate + NAD(+) = (2R)-3-phospho-glyceroyl phosphate + NADH + H(+). Its pathway is carbohydrate degradation; glycolysis; pyruvate from D-glyceraldehyde 3-phosphate: step 1/5. Functionally, catalyzes the oxidative phosphorylation of glyceraldehyde 3-phosphate (G3P) to 1,3-bisphosphoglycerate (BPG) using the cofactor NAD. The first reaction step involves the formation of a hemiacetal intermediate between G3P and a cysteine residue, and this hemiacetal intermediate is then oxidized to a thioester, with concomitant reduction of NAD to NADH. The reduced NADH is then exchanged with the second NAD, and the thioester is attacked by a nucleophilic inorganic phosphate to produce BPG. This is Glyceraldehyde-3-phosphate dehydrogenase 2 (gapA2) from Staphylococcus epidermidis (strain ATCC 12228 / FDA PCI 1200).